A 208-amino-acid polypeptide reads, in one-letter code: Methyl-CpG-binding domain protein 3-like 2 (208 aa).

Positions 1-89 (MGEPAFTSFP…HLEKPQQLCA (89 aa)) are interacts with MBD3.

This sequence belongs to the MBD3L family. Interacts (via N-terminus) with MBD3; the interaction is direct. Interacts with MTA1. Interacts with HDAC1. Interacts with HDAC2. Interacts with RBBP4. Interacts with RBBP7. Detected at low levels in several somatic tissues. Highly expressed in the ovarian teratocarcinoma cell line PA-1.

Its subcellular location is the nucleus. In terms of biological role, may displace the NuRD complex from chromatin. This chain is Methyl-CpG-binding domain protein 3-like 2 (MBD3L2), found in Homo sapiens (Human).